Here is a 513-residue protein sequence, read N- to C-terminus: Sodium/potassium/calcium exchanger 5 (513 aa).

Positions 1–35 (MRTDVFLQRRKRRDVLLSIIALLLLIFAIVHLVFC) are cleaved as a signal peptide. At 36 to 78 (AGLSFQGSSSARVRRDLENASECVQPQSSEFPEGFFTVQERKD) the chain is on the extracellular side. A helical transmembrane segment spans residues 79-99 (GGILIYFMIIFYMLLSVSIVC). At 100–123 (DEYFLPSLEVISERLGLSQDVAGA) the chain is on the cytoplasmic side. A helical membrane pass occupies residues 124-144 (TFMAAGSSAPELVTAFLGVFV). The Extracellular segment spans residues 145–148 (TKGD). The chain crosses the membrane as a helical span at residues 149–169 (IGVSTIMGSAVYNLLCICAAC). The Cytoplasmic segment spans residues 170-181 (GLLSSAVGRLSC). The chain crosses the membrane as a helical span at residues 182–202 (WPLFRDCVAYAISVAAVIAII). Residues 203-207 (SDNRV) lie on the Extracellular side of the membrane. The helical transmembrane segment at 208–228 (YWYDGACLLLVYGVYVAVLCF) threads the bilayer. Over 229–315 (DLRISEYVMQ…KSVFSMPDHD (87 aa)) the chain is Cytoplasmic. The chain crosses the membrane as a helical span at residues 316–336 (LKRILWVLSLPVSTLLFVSVP). At 337-350 (DCRRPFWKNFYMLT) the chain is on the extracellular side. The chain crosses the membrane as a helical span at residues 351–371 (FLMSAVWISAFTYVLVWMVTI). The Cytoplasmic segment spans residues 372 to 381 (VGETLGIPDT). The helical transmembrane segment at 382–402 (VMGMTLLAAGTSIPDTVASVM) threads the bilayer. Topologically, residues 403–420 (VAREGKSDMAMSNIVGSN) are extracellular. Residues 421–441 (VFDMLCLGLPWFIQTVFVDVG) traverse the membrane as a helical segment. The Cytoplasmic segment spans residues 442-450 (SPVEVNSSG). A helical transmembrane segment spans residues 451-471 (LVFMSCTLLLSIIFLFLAVHI). The Extracellular segment spans residues 472-482 (NGWKLDWKLGL). Residues 483 to 503 (VCLACYILFATLSILYELGII) traverse the membrane as a helical segment. Residues 504-513 (GNNPIRSCSD) are Cytoplasmic-facing.

The protein belongs to the Ca(2+):cation antiporter (CaCA) (TC 2.A.19) family. SLC24A subfamily. Highly expressed in melanin-producing cells. Colocalizes with melanin biosynthesis marker dct.

The protein resides in the golgi apparatus. It is found in the trans-Golgi network membrane. It localises to the melanosome. The enzyme catalyses Ca(2+)(out) + K(+)(out) + 4 Na(+)(in) = Ca(2+)(in) + K(+)(in) + 4 Na(+)(out). In terms of biological role, calcium, potassium:sodium antiporter that transports 1 Ca(2+) and 1 K(+) to the melanosome in exchange for 4 cytoplasmic Na(+). Involved in pigmentation, possibly by participating in ion transport in melanosomes. Predominant sodium-calcium exchanger in melanocytes. This chain is Sodium/potassium/calcium exchanger 5 (slc24a5), found in Danio rerio (Zebrafish).